We begin with the raw amino-acid sequence, 369 residues long: Methylthioribose-1-phosphate isomerase (369 aa).

At M1 the chain carries N-acetylmethionine. An Omega-N-methylarginine modification is found at R158. D248 (proton donor) is an active-site residue. Phosphoserine is present on S366.

Belongs to the eIF-2B alpha/beta/delta subunits family. MtnA subfamily.

Its subcellular location is the cytoplasm. It localises to the nucleus. The enzyme catalyses 5-(methylsulfanyl)-alpha-D-ribose 1-phosphate = 5-(methylsulfanyl)-D-ribulose 1-phosphate. Its pathway is amino-acid biosynthesis; L-methionine biosynthesis via salvage pathway; L-methionine from S-methyl-5-thio-alpha-D-ribose 1-phosphate: step 1/6. In terms of biological role, catalyzes the interconversion of methylthioribose-1-phosphate (MTR-1-P) into methylthioribulose-1-phosphate (MTRu-1-P). This Rattus norvegicus (Rat) protein is Methylthioribose-1-phosphate isomerase (Mri1).